Here is a 279-residue protein sequence, read N- to C-terminus: Undecaprenyl-diphosphatase (279 aa).

The next 6 membrane-spanning stretches (helical) occupy residues 45–65 (FVEM…IVIY), 85–105 (WQLW…ALPF), 113–133 (FNFM…FIWV), 188–208 (SVAA…YSGL), 226–246 (LILL…IRFL), and 255–275 (FTIF…YWLV).

The protein belongs to the UppP family.

Its subcellular location is the cell membrane. It carries out the reaction di-trans,octa-cis-undecaprenyl diphosphate + H2O = di-trans,octa-cis-undecaprenyl phosphate + phosphate + H(+). Catalyzes the dephosphorylation of undecaprenyl diphosphate (UPP). Confers resistance to bacitracin. The chain is Undecaprenyl-diphosphatase from Streptococcus agalactiae serotype III (strain NEM316).